The chain runs to 219 residues: 7-cyano-7-deazaguanine synthase (219 aa).

Position 10 to 20 (10 to 20 (FSGGQDSTTCL)) interacts with ATP. Residues C187, C196, C199, and C202 each contribute to the Zn(2+) site.

The protein belongs to the QueC family. As to quaternary structure, homodimer. Zn(2+) is required as a cofactor.

It carries out the reaction 7-carboxy-7-deazaguanine + NH4(+) + ATP = 7-cyano-7-deazaguanine + ADP + phosphate + H2O + H(+). Its pathway is purine metabolism; 7-cyano-7-deazaguanine biosynthesis. Catalyzes the ATP-dependent conversion of 7-carboxy-7-deazaguanine (CDG) to 7-cyano-7-deazaguanine (preQ(0)). This Lysinibacillus sphaericus (strain C3-41) protein is 7-cyano-7-deazaguanine synthase.